A 210-amino-acid chain; its full sequence is Small ribosomal subunit protein uS3 (210 aa).

Positions 38–106 constitute a KH type-2 domain; that stretch reads IRAWLKKRLA…EVQINIVEIR (69 aa).

It belongs to the universal ribosomal protein uS3 family. In terms of assembly, part of the 30S ribosomal subunit. Forms a tight complex with proteins S10 and S14.

Functionally, binds the lower part of the 30S subunit head. Binds mRNA in the 70S ribosome, positioning it for translation. This chain is Small ribosomal subunit protein uS3, found in Magnetococcus marinus (strain ATCC BAA-1437 / JCM 17883 / MC-1).